The sequence spans 469 residues: Glutamate--tRNA ligase 1 (469 aa).

A 'HIGH' region motif is present at residues 9-19 (PSPTGYLHVGG). 4 residues coordinate Zn(2+): Cys-98, Cys-100, Cys-125, and Glu-127. The 'KMSKS' region motif lies at 236–240 (RLSKR). Lys-239 is an ATP binding site.

Belongs to the class-I aminoacyl-tRNA synthetase family. Glutamate--tRNA ligase type 1 subfamily. As to quaternary structure, monomer. Zn(2+) is required as a cofactor.

It localises to the cytoplasm. The catalysed reaction is tRNA(Glu) + L-glutamate + ATP = L-glutamyl-tRNA(Glu) + AMP + diphosphate. Functionally, catalyzes the attachment of glutamate to tRNA(Glu) in a two-step reaction: glutamate is first activated by ATP to form Glu-AMP and then transferred to the acceptor end of tRNA(Glu). The chain is Glutamate--tRNA ligase 1 from Nitrosococcus oceani (strain ATCC 19707 / BCRC 17464 / JCM 30415 / NCIMB 11848 / C-107).